A 1701-amino-acid polypeptide reads, in one-letter code: DDB1- and CUL4-associated factor homolog 1 (1701 aa).

The span at 224-245 (HAEQSTSNGTSIPSIKITSVDG) shows a compositional bias: polar residues. Disordered stretches follow at residues 224-269 (HAEQ…RRTE), 883-906 (DRPA…GNNF), and 932-961 (RPSN…TPTL). The 33-residue stretch at 851-883 (NQAELLQLIHDHLLKSKLDSVAAMLKSEAKLPD) folds into the LisH domain. A compositionally biased stretch (polar residues) spans 888 to 906 (RSINTPILNKPLPSSGNNF). WD repeat units follow at residues 1086–1125 (DHDE…DEGH), 1128–1169 (CHGS…QRVH), 1171–1210 (YRED…DTYL), and 1215–1252 (GLQY…HVFD). 2 consecutive short sequence motifs (DWD box) follow at residues 1237–1245 (LLWDVRKKN) and 1275–1282 (EVYDIRTF). Disordered stretches follow at residues 1384–1559 (IGRL…DINL), 1566–1585 (EARV…PVDP), and 1641–1701 (LVRG…DDEA). Composition is skewed to acidic residues over residues 1390-1423 (NEDE…DEEI) and 1451-1461 (DDNDTLDDLDF). A compositionally biased stretch (basic residues) spans 1468 to 1479 (IIRRQAQRRRQR). Acidic residues-rich tracts occupy residues 1494–1512 (EGSD…DPDF) and 1520–1543 (DLVD…DDDS). The segment covering 1567–1581 (ARVVENEGNNERPAR) has biased composition (basic and acidic residues). Over residues 1667-1678 (DTDEYQSEEEEI) the composition is skewed to acidic residues.

The protein belongs to the VPRBP/DCAF1 family. In terms of assembly, component of the cul4-rbx1-ddb1-dcaf1 E3 ubiquitin-protein ligase complex.

Its subcellular location is the nucleus. The protein operates within protein modification; protein ubiquitination. Its function is as follows. Component of the cul4-rbx1-ddb1-dcaf1 E3 ubiquitin-protein ligase complex, dcaf1 may function as the substrate recognition module within this complex. This Caenorhabditis elegans protein is DDB1- and CUL4-associated factor homolog 1 (dcaf-1).